Reading from the N-terminus, the 1012-residue chain is Structural polyprotein (1012 aa).

Asp-30 provides a ligand contact to a divalent metal cation. The Peptidase S50 domain maps to 513-755 (ADKGYEVVAN…AGRQYHLAMA (243 aa)). The active-site Nucleophile is the Ser-652. Lys-692 is a catalytic residue. 2 disordered regions span residues 837–857 (GYGV…KDTR) and 968–1012 (TAME…EDLE). Residues 975–986 (RNPRRAPPKPKP) show a composition bias toward basic residues. Positions 1003 to 1012 (IRTVSDEDLE) are interaction with VP1 protein.

As to quaternary structure, homotrimer. A central divalent metal stabilizes the VP2 trimer. Interacts with host ITGA4/ITGB1. Homodimer. Interacts (via C-terminus) with VP1 in the cytoplasm. Interacts with VP2. In terms of processing, specific enzymatic cleavages yield mature proteins. The capsid assembly seems to be regulated by polyprotein processing. The protease VP4 cleaves itself off the polyprotein, thus releasing pre-VP2 and VP3 within the infected cell. During capsid assembly, the C-terminus of pre-VP2 is further processed by VP4, giving rise to VP2, the external capsid protein and three small peptides that all stay closely associated with the capsid.

It localises to the virion. The protein localises to the host cytoplasm. Capsid protein VP2 self assembles to form an icosahedral capsid with a T=13 symmetry, about 70 nm in diameter, and consisting of 260 VP2 trimers. The capsid encapsulates the genomic dsRNA. VP2 is also involved in attachment and entry into the host cell by interacting with host ITGA4/ITGB1. Its function is as follows. The precursor of VP2 plays an important role in capsid assembly. First, pre-VP2 and VP2 oligomers assemble to form a procapsid. Then, the pre-VP2 intermediates may be processed into VP2 proteins by proteolytic cleavage mediated by VP4 to obtain the mature virion. The final capsid is composed of pentamers and hexamers but VP2 has a natural tendency to assemble into all-pentameric structures. Therefore pre-VP2 may be required to allow formation of the hexameric structures. Functionally, protease VP4 is a serine protease that cleaves the polyprotein into its final products. Pre-VP2 is first partially cleaved, and may be completely processed by VP4 upon capsid maturation. In terms of biological role, capsid protein VP3 plays a key role in virion assembly by providing a scaffold for the capsid made of VP2. May self-assemble to form a T=4-like icosahedral inner-capsid composed of at least 180 trimers. Plays a role in genomic RNA packaging by recruiting VP1 into the capsid and interacting with the dsRNA genome segments to form a ribonucleoprotein complex. Additionally, the interaction of the VP3 C-terminal tail with VP1 removes the inherent structural blockade of the polymerase active site. Thus, VP3 can also function as a transcriptional activator. Structural peptide 1 is a small peptide derived from pre-VP2 C-terminus. It destabilizes and perforates cell membranes, suggesting a role during entry. Its function is as follows. Structural peptide 2 is a small peptide derived from pVP2 C-terminus. It is not essential for the virus viability, but viral growth is affected when missing. Functionally, structural peptide 3 is a small peptide derived from pVP2 C-terminus. It is not essential for the virus viability, but viral growth is affected when missing. In terms of biological role, structural peptide 4 is a small peptide derived from pVP2 C-terminus. It is essential for the virus viability. The chain is Structural polyprotein from Gallus gallus (Chicken).